The chain runs to 623 residues: DNA-directed RNA polymerase subunit beta' (623 aa).

Zn(2+) is bound by residues C70, C72, C85, and C88. Mg(2+)-binding residues include D466, D468, and D470.

Belongs to the RNA polymerase beta' chain family. RpoC1 subfamily. In terms of assembly, in plastids the minimal PEP RNA polymerase catalytic core is composed of four subunits: alpha, beta, beta', and beta''. When a (nuclear-encoded) sigma factor is associated with the core the holoenzyme is formed, which can initiate transcription. Mg(2+) is required as a cofactor. The cofactor is Zn(2+).

It is found in the plastid. The protein resides in the chloroplast. The catalysed reaction is RNA(n) + a ribonucleoside 5'-triphosphate = RNA(n+1) + diphosphate. In terms of biological role, DNA-dependent RNA polymerase catalyzes the transcription of DNA into RNA using the four ribonucleoside triphosphates as substrates. The chain is DNA-directed RNA polymerase subunit beta' from Rhodomonas salina (Cryptomonas salina).